The sequence spans 370 residues: Putative agmatine deiminase (370 aa).

Cys-361 serves as the catalytic Amidino-cysteine intermediate.

This sequence belongs to the agmatine deiminase family.

It catalyses the reaction agmatine + H2O = N-carbamoylputrescine + NH4(+). The sequence is that of Putative agmatine deiminase from Shewanella sp. (strain MR-7).